Reading from the N-terminus, the 102-residue chain is Cysteine-rich venom protein VAR9 (102 aa).

The signal sequence occupies residues 1–19 (MILLKLYLTLAAILCQSRG). Residues 41-80 (NKHNDLRRTVDPPAKNMLKMSWDNIIAESAKRAALRCNYK) form the SCP domain.

The protein belongs to the CRISP family. Post-translationally, contains 8 disulfide bonds. As to expression, expressed by the venom gland.

It localises to the secreted. Its function is as follows. Blocks ryanodine receptors, and potassium channels. This is Cysteine-rich venom protein VAR9 from Varanus varius (Lace monitor lizard).